A 179-amino-acid chain; its full sequence is Guanosine-3',5'-bis(diphosphate) 3'-pyrophosphohydrolase MESH1 (179 aa).

In terms of domain architecture, HD spans 32–127 (YINHPLGVAR…VKLADKLYNL (96 aa)). Positions 35, 61, and 62 each coordinate Mn(2+). Catalysis depends on nucleophile residues Glu-65 and Asp-66. Mn(2+) is bound at residue Asp-122.

It belongs to the MESH1 family. Mn(2+) is required as a cofactor.

The enzyme catalyses guanosine 3',5'-bis(diphosphate) + H2O = GDP + diphosphate + H(+). In terms of biological role, ppGpp hydrolyzing enzyme involved in starvation response. The polypeptide is Guanosine-3',5'-bis(diphosphate) 3'-pyrophosphohydrolase MESH1 (hddc3) (Xenopus tropicalis (Western clawed frog)).